The sequence spans 294 residues: Putative glucose-6-phosphate 1-epimerase (294 aa).

2 residues coordinate substrate: Arg-74 and Arg-99. His-164 is a catalytic residue. A substrate-binding site is contributed by Asp-208. Glu-267 is an active-site residue.

Belongs to the glucose-6-phosphate 1-epimerase family. In terms of assembly, monomer in solution.

It catalyses the reaction alpha-D-glucose 6-phosphate = beta-D-glucose 6-phosphate. The sequence is that of Putative glucose-6-phosphate 1-epimerase (yeaD) from Escherichia coli (strain K12).